The primary structure comprises 303 residues: UDP-3-O-acyl-N-acetylglucosamine deacetylase (303 aa).

Zn(2+) contacts are provided by histidine 78, histidine 237, and aspartate 241. Residue histidine 264 is the Proton donor of the active site.

The protein belongs to the LpxC family. It depends on Zn(2+) as a cofactor.

It catalyses the reaction a UDP-3-O-[(3R)-3-hydroxyacyl]-N-acetyl-alpha-D-glucosamine + H2O = a UDP-3-O-[(3R)-3-hydroxyacyl]-alpha-D-glucosamine + acetate. It functions in the pathway glycolipid biosynthesis; lipid IV(A) biosynthesis; lipid IV(A) from (3R)-3-hydroxytetradecanoyl-[acyl-carrier-protein] and UDP-N-acetyl-alpha-D-glucosamine: step 2/6. Functionally, catalyzes the hydrolysis of UDP-3-O-myristoyl-N-acetylglucosamine to form UDP-3-O-myristoylglucosamine and acetate, the committed step in lipid A biosynthesis. This chain is UDP-3-O-acyl-N-acetylglucosamine deacetylase, found in Cellvibrio japonicus (strain Ueda107) (Pseudomonas fluorescens subsp. cellulosa).